Reading from the N-terminus, the 541-residue chain is Protein wntless homolog B (541 aa).

The Cytoplasmic portion of the chain corresponds to 1–15; that stretch reads MAGAIIENMSTKKLC. A helical transmembrane segment spans residues 16 to 36; that stretch reads MVGVALLLLQVLAFLVGGLIA. Topologically, residues 37-232 are lumenal; that stretch reads PKPTTYVNPV…SIFQNGGFTM (196 aa). A helical membrane pass occupies residues 233-253; that stretch reads VWFAMKTFLTPCIIIIMIWYW. Topologically, residues 254 to 268 are cytoplasmic; it reads RRITMMTRSPVLLEK. Residues 269–289 traverse the membrane as a helical segment; sequence VIFALGISMTFINIPVEWFSI. Residues 290-303 are Lumenal-facing; the sequence is GYDWTWMLLFGDIR. The chain crosses the membrane as a helical span at residues 304–324; it reads QGIFYAMLLSFWIIFCGEHMM. The Cytoplasmic segment spans residues 325-331; that stretch reads DQAERNR. Residues 332 to 352 form a helical membrane-spanning segment; that stretch reads ISIYWKQVGPIAFGSCCLFIF. Residues 353-379 lie on the Lumenal side of the membrane; sequence DMCERGVQLKNPFYSIWTTDVGAEIAM. The chain crosses the membrane as a helical span at residues 380–400; the sequence is AFIIVAGICACLYFLFLCFMV. The Cytoplasmic segment spans residues 401–431; that stretch reads YQVFRNISGKRSNLPAMSKARRLHYEGLIFR. The helical transmembrane segment at 432–452 threads the bilayer; sequence FKFLMIITLACAALTVVFFIT. Residues 453 to 471 lie on the Lumenal side of the membrane; sequence TQITEGNWKLGDLSIELNS. The helical transmembrane segment at 472 to 492 threads the bilayer; the sequence is AFFTGIYGMWNLYVFALMFLY. The Cytoplasmic portion of the chain corresponds to 493–541; sequence APSHKHYGDGQSNDGAGMSSGEELQLTTTITHIDGPTELYRLAGKEAQE.

It belongs to the wntless family. As to expression, enriched in the animal hemisphere of the early cleavage embryo, where expression persists until the late gastrula stage. At the neurula stage, strongly expressed at the border of the neural plate and dorsal midline. After the neurula stage, expressed in various organs, including the eye, liver, heart, pronephros, otic vesicle, and dorsal neural tube. Expression in the developing eye is dynamic; expressed in the eye field from stages 23 to 27, and from stage 30 expression is confined to distinct regions including the central part and border of the eye.

Its subcellular location is the golgi apparatus membrane. The protein resides in the cytoplasmic vesicle membrane. Its function is as follows. Required for a subset of Wnt-dependent developmental processes, in particular, eye and pronephros development. Regulates the secretion of wnt4, which is required for eye development. The polypeptide is Protein wntless homolog B (wls-b) (Xenopus laevis (African clawed frog)).